We begin with the raw amino-acid sequence, 207 residues long: dITP/XTP pyrophosphatase (207 aa).

11 to 16 (TGNPGK) provides a ligand contact to substrate. The active-site Proton acceptor is the aspartate 72. Aspartate 72 serves as a coordination point for Mg(2+). Residues serine 73, 154–157 (FGYD), lysine 177, and 182–183 (HR) contribute to the substrate site.

The protein belongs to the HAM1 NTPase family. Homodimer. Mg(2+) serves as cofactor.

It carries out the reaction XTP + H2O = XMP + diphosphate + H(+). It catalyses the reaction dITP + H2O = dIMP + diphosphate + H(+). The enzyme catalyses ITP + H2O = IMP + diphosphate + H(+). Pyrophosphatase that catalyzes the hydrolysis of nucleoside triphosphates to their monophosphate derivatives, with a high preference for the non-canonical purine nucleotides XTP (xanthosine triphosphate), dITP (deoxyinosine triphosphate) and ITP. Seems to function as a house-cleaning enzyme that removes non-canonical purine nucleotides from the nucleotide pool, thus preventing their incorporation into DNA/RNA and avoiding chromosomal lesions. The chain is dITP/XTP pyrophosphatase from Thermus thermophilus (strain ATCC 27634 / DSM 579 / HB8).